The primary structure comprises 346 residues: Ribosomal RNA small subunit methyltransferase H (346 aa).

S-adenosyl-L-methionine-binding positions include 47-49, Asp65, Phe92, Asp113, and Gln120; that span reads GGY. Positions 270–279 are enriched in basic and acidic residues; that stretch reads RGEAPSRRLP. The interval 270–346 is disordered; that stretch reads RGEAPSRRLP…ALPQRAAKGR (77 aa).

Belongs to the methyltransferase superfamily. RsmH family.

The protein localises to the cytoplasm. It catalyses the reaction cytidine(1402) in 16S rRNA + S-adenosyl-L-methionine = N(4)-methylcytidine(1402) in 16S rRNA + S-adenosyl-L-homocysteine + H(+). Its function is as follows. Specifically methylates the N4 position of cytidine in position 1402 (C1402) of 16S rRNA. The protein is Ribosomal RNA small subunit methyltransferase H of Methylocella silvestris (strain DSM 15510 / CIP 108128 / LMG 27833 / NCIMB 13906 / BL2).